A 365-amino-acid chain; its full sequence is UBX domain-containing protein 2B (365 aa).

The tract at residues 1 to 97 is disordered; sequence MADGGASPAQ…MSDDKENQRF (97 aa). Composition is skewed to basic and acidic residues over residues 50-63 and 73-95; these read DEAKRQSLRSDKPT and LKIDSFRSLRKPERSMSDDKENQ. An SEP domain is found at 175–240; it reads DVQILLKLWR…MEDHQEQEYV (66 aa). The UBX domain maps to 286-363; the sequence is DSVPATKIQI…DILNTVILQQ (78 aa).

It belongs to the NSFL1C family.

The protein localises to the nucleus. The protein resides in the cytoplasm. It is found in the cytosol. It localises to the endoplasmic reticulum. Its subcellular location is the golgi apparatus. The protein localises to the cytoskeleton. The protein resides in the microtubule organizing center. It is found in the centrosome. Functionally, adapter protein required for Golgi and endoplasmic reticulum biogenesis. Involved in Golgi and endoplasmic reticulum maintenance during interphase and in their reassembly at the end of mitosis. Regulates the centrosomal levels of kinase AURKA/Aurora A during mitotic progression by promoting AURKA removal from centrosomes in prophase. Also, regulates spindle orientation during mitosis. This chain is UBX domain-containing protein 2B (UBXN2B), found in Gallus gallus (Chicken).